Reading from the N-terminus, the 491-residue chain is Malonate-semialdehyde dehydrogenase 1 (491 aa).

NAD(+)-binding residues include Ala154, Phe156, Lys180, Glu183, Arg184, Ser233, and Thr255. The active-site Nucleophile is the Cys288. Glu386 lines the NAD(+) pocket.

The protein belongs to the aldehyde dehydrogenase family. IolA subfamily. In terms of assembly, homotetramer.

It carries out the reaction 3-oxopropanoate + NAD(+) + CoA + H2O = hydrogencarbonate + acetyl-CoA + NADH + H(+). The catalysed reaction is 2-methyl-3-oxopropanoate + NAD(+) + CoA + H2O = propanoyl-CoA + hydrogencarbonate + NADH + H(+). It participates in polyol metabolism; myo-inositol degradation into acetyl-CoA; acetyl-CoA from myo-inositol: step 7/7. Catalyzes the oxidation of malonate semialdehyde (MSA) and methylmalonate semialdehyde (MMSA) into acetyl-CoA and propanoyl-CoA, respectively. Is involved in a myo-inositol catabolic pathway. Bicarbonate, and not CO2, is the end-product of the enzymatic reaction. This Shouchella clausii (strain KSM-K16) (Alkalihalobacillus clausii) protein is Malonate-semialdehyde dehydrogenase 1.